The chain runs to 113 residues: Large ribosomal subunit protein bL19 (113 aa).

This sequence belongs to the bacterial ribosomal protein bL19 family.

Functionally, this protein is located at the 30S-50S ribosomal subunit interface and may play a role in the structure and function of the aminoacyl-tRNA binding site. In Mycobacterium leprae (strain Br4923), this protein is Large ribosomal subunit protein bL19.